The sequence spans 227 residues: UPF0758 protein SSA_1218 (227 aa).

The region spanning 104–226 is the MPN domain; the sequence is QIMGSQKLAR…YYSYREETDM (123 aa). Residues His-175, His-177, and Asp-188 each contribute to the Zn(2+) site. A JAMM motif motif is present at residues 175–188; the sequence is HNHPSGSVVPSRND.

Belongs to the UPF0758 family.

The sequence is that of UPF0758 protein SSA_1218 from Streptococcus sanguinis (strain SK36).